The following is a 523-amino-acid chain: Beta-glucosidase 31 (523 aa).

A signal peptide spans 1–22 (MTPARVVFICCVVLLAAAAAAA). Residues glutamine 49, histidine 149, and 194-195 (NE) contribute to the a beta-D-glucoside site. Glutamate 195 serves as the catalytic Proton donor. A disulfide bridge links cysteine 214 with cysteine 223. Asparagine 227 is a glycosylation site (N-linked (GlcNAc...) asparagine). Residues tyrosine 339 and glutamate 413 each coordinate a beta-D-glucoside. Catalysis depends on glutamate 413, which acts as the Nucleophile. A glycan (N-linked (GlcNAc...) asparagine) is linked at asparagine 450. Residues tryptophan 460, 467 to 468 (EY), and phenylalanine 476 each bind a beta-D-glucoside.

This sequence belongs to the glycosyl hydrolase 1 family.

The catalysed reaction is Hydrolysis of terminal, non-reducing beta-D-glucosyl residues with release of beta-D-glucose.. This Oryza sativa subsp. japonica (Rice) protein is Beta-glucosidase 31 (BGLU31).